Reading from the N-terminus, the 354-residue chain is Thymidylate synthase (354 aa).

The tract at residues 1 to 32 is disordered; it reads MPAAGSEPSRPPSPPGVQEQSAEPRPPPPPHG. Arginine 53 contributes to the dUMP binding site. Serine 117 bears the Phosphoserine mark. 178–179 serves as a coordination point for dUMP; that stretch reads RR. The Nucleophile role is filled by cysteine 198. DUMP-binding positions include 218 to 221, asparagine 229, and 259 to 261; these read RSGD and HIY. (6R)-5,10-methylene-5,6,7,8-tetrahydrofolate is bound at residue aspartate 221. Residue lysine 349 forms a Glycyl lysine isopeptide (Lys-Gly) (interchain with G-Cter in SUMO2) linkage. A (6R)-5,10-methylene-5,6,7,8-tetrahydrofolate-binding site is contributed by alanine 353.

It belongs to the thymidylate synthase family. In terms of assembly, homodimer.

It localises to the nucleus. The protein resides in the cytoplasm. Its subcellular location is the mitochondrion. The protein localises to the mitochondrion matrix. It is found in the mitochondrion inner membrane. It carries out the reaction dUMP + (6R)-5,10-methylene-5,6,7,8-tetrahydrofolate = 7,8-dihydrofolate + dTMP. The protein operates within pyrimidine metabolism; dTTP biosynthesis. Functionally, catalyzes the reductive methylation of 2'-deoxyuridine 5'-monophosphate (dUMP) to thymidine 5'-monophosphate (dTMP), using the cosubstrate, 5,10- methylenetetrahydrofolate (CH2H4folate) as a 1-carbon donor and reductant and contributes to the de novo mitochondrial thymidylate biosynthesis pathway. This Bos taurus (Bovine) protein is Thymidylate synthase (TYMS).